Here is a 275-residue protein sequence, read N- to C-terminus: Large ribosomal subunit protein uL2 (275 aa).

Disordered regions lie at residues 24-48 and 224-264; these read LTTD…NAGD and VMNP…NKRT. The span at 31–42 shows a compositional bias: basic residues; the sequence is KPLTKTKQRTGG.

This sequence belongs to the universal ribosomal protein uL2 family. In terms of assembly, part of the 50S ribosomal subunit. Forms a bridge to the 30S subunit in the 70S ribosome.

Functionally, one of the primary rRNA binding proteins. Required for association of the 30S and 50S subunits to form the 70S ribosome, for tRNA binding and peptide bond formation. It has been suggested to have peptidyltransferase activity; this is somewhat controversial. Makes several contacts with the 16S rRNA in the 70S ribosome. The sequence is that of Large ribosomal subunit protein uL2 from Koribacter versatilis (strain Ellin345).